The following is a 340-amino-acid chain: Nitrilase (340 aa).

The CN hydrolase domain maps to 7–273 (IRAAAVQIAP…EGMVVADLDM (267 aa)). Glu47 acts as the Proton acceptor in catalysis. Residue Lys129 is part of the active site. Residue Cys163 is the Nucleophile of the active site.

Belongs to the carbon-nitrogen hydrolase superfamily. Nitrilase family. In terms of assembly, forms oligomers.

The enzyme catalyses a nitrile + 2 H2O = a carboxylate + NH4(+). It catalyses the reaction phenylpropanonitrile + 2 H2O = 3-phenylpropanoate + NH4(+). It carries out the reaction an aliphatic nitrile + 2 H2O = a carboxylate + NH4(+). Its activity is regulated as follows. Highly resistant to various miscible cosolvents and tolerates high substrate concentrations. Functionally, catalyzes the hydrolysis of a broad range of nitriles to yield their corresponding carboxylic acid and ammonia. In vitro, shows high activity toward benzylic/unsaturated nitriles. The preferred substrate is trans-cinnamonitrile, followed by mono/di-cyanopyridines and aromatic substituted nitriles, with a moderate activity toward 3-phenylpropionitrile. Shows weaker activity toward the common dinitrile fumaronitrile. Also shows weak activity toward some aliphatic nitriles, including adiponitrile and glutaronitrile, and the arylacetonitrile 2-thiopheneacetonitrile. The protein is Nitrilase of Paraburkholderia phymatum (strain DSM 17167 / CIP 108236 / LMG 21445 / STM815) (Burkholderia phymatum).